The primary structure comprises 380 residues: Putative 8-amino-7-oxononanoate synthase (380 aa).

Position 22 (arginine 22) interacts with substrate. Pyridoxal 5'-phosphate is bound at residue glycine 109–tyrosine 110. Histidine 134 lines the substrate pocket. Residues serine 182, aspartate 207–histidine 210, and threonine 238–lysine 241 each bind pyridoxal 5'-phosphate. N6-(pyridoxal phosphate)lysine is present on lysine 241. Threonine 353 provides a ligand contact to substrate.

This sequence belongs to the class-II pyridoxal-phosphate-dependent aminotransferase family. BioF subfamily. Homodimer. Requires pyridoxal 5'-phosphate as cofactor.

It carries out the reaction 6-carboxyhexanoyl-[ACP] + L-alanine + H(+) = (8S)-8-amino-7-oxononanoate + holo-[ACP] + CO2. It functions in the pathway cofactor biosynthesis; biotin biosynthesis. Its function is as follows. Catalyzes the decarboxylative condensation of pimeloyl-[acyl-carrier protein] and L-alanine to produce 8-amino-7-oxononanoate (AON), [acyl-carrier protein], and carbon dioxide. The sequence is that of Putative 8-amino-7-oxononanoate synthase (bioF) from Gloeothece citriformis (strain PCC 7424) (Cyanothece sp. (strain PCC 7424)).